Consider the following 595-residue polypeptide: DNA primase (595 aa).

Residues 38-62 (CPFHDEKTPSFIVYPTRGHYHCYGC) form a CHC2-type zinc finger. The Toprim domain maps to 251-331 (RRVILVEGQA…GITAIVCRLP (81 aa)). Glu257, Asp302, and Asp304 together coordinate Mg(2+). The segment covering 430-441 (KGKKVSAKEPSS) has biased composition (basic and acidic residues). Positions 430–451 (KGKKVSAKEPSSESKQTSTEGK) are disordered.

It belongs to the DnaG primase family. Monomer. Interacts with DnaB. Requires Zn(2+) as cofactor. It depends on Mg(2+) as a cofactor.

The enzyme catalyses ssDNA + n NTP = ssDNA/pppN(pN)n-1 hybrid + (n-1) diphosphate.. Its function is as follows. RNA polymerase that catalyzes the synthesis of short RNA molecules used as primers for DNA polymerase during DNA replication. This chain is DNA primase, found in Chlamydia trachomatis serovar D (strain ATCC VR-885 / DSM 19411 / UW-3/Cx).